Reading from the N-terminus, the 615-residue chain is MCGIVGYVGPQSALDVVMAGLKRLEYRGYDSAGVAVLADGGLATAKRAGKLVNLDKELSEHPLPAAATGIGHTRWATHGGPTDANAHPHLDNAGRVAVVHNGIIENFAPLRAELAERGHELPSETDTEVVAHLLAEEYSACADLAEAMRLVCGRLEGAFTLVAVHADAPDVVVGARRNSPLVVGVGEGEYFLASDVAAFIAHTRDAVELGQDQVVELRRDGVRVTGFDGSPADVRSYHVDWDASAAEKCGYASFMLKEIAEQPKAVADTLLGRIDGSGTLSLDEVRIPPGVLREVDKVVVVACGTAFHAGLIAKYAIEHWTRIPCEVELASEFRYRDPILDQQTLVVAISQSGETMDTLMALRHAREQGARVLAICNTNGSTIPRESDAVLYTHAGPEVAVASTKAFLTQLVACYLVALYLGQVRGTKYGDEIGDVVRDLSGISGAVERVLGTMDPVRQLARSLAHKNTVLFLGRHVGHPVALEGALKLKELAYMHAEGFAAGELKHGPIALIEEDLPVVVVVPSPRGRSVLHDKIVSNIQEIRARGARTIVIAEEGDEAVVPYADHLVRIPATPTLLQPLVATVPLQVFACELATARGNEVDQPRNLAKSVTVE.

The Nucleophile; for GATase activity role is filled by Cys-2. A Glutamine amidotransferase type-2 domain is found at 2 to 220 (CGIVGYVGPQ…QDQVVELRRD (219 aa)). 2 SIS domains span residues 287–427 (IPPG…VRGT) and 460–605 (LARS…VDQP). The active-site For Fru-6P isomerization activity is Lys-610.

In terms of assembly, homodimer.

It localises to the cytoplasm. It catalyses the reaction D-fructose 6-phosphate + L-glutamine = D-glucosamine 6-phosphate + L-glutamate. Functionally, catalyzes the first step in hexosamine metabolism, converting fructose-6P into glucosamine-6P using glutamine as a nitrogen source. This chain is Glutamine--fructose-6-phosphate aminotransferase [isomerizing], found in Streptomyces coelicolor (strain ATCC BAA-471 / A3(2) / M145).